The primary structure comprises 363 residues: Fructose-bisphosphate aldolase, muscle type (363 aa).

Positions 56 and 147 each coordinate substrate. Lys230 serves as the catalytic Schiff-base intermediate with dihydroxyacetone-P.

It belongs to the class I fructose-bisphosphate aldolase family. In terms of assembly, homotetramer. In terms of tissue distribution, expressed mainly in the skeletal muscle, heart muscle, brain, and some other tissues, but probably not in liver.

The enzyme catalyses beta-D-fructose 1,6-bisphosphate = D-glyceraldehyde 3-phosphate + dihydroxyacetone phosphate. Its pathway is carbohydrate degradation; glycolysis; D-glyceraldehyde 3-phosphate and glycerone phosphate from D-glucose: step 4/4. The chain is Fructose-bisphosphate aldolase, muscle type from Lethenteron camtschaticum (Japanese lamprey).